The chain runs to 146 residues: 3-dehydroquinate dehydratase (146 aa).

Residue tyrosine 23 is the Proton acceptor of the active site. Substrate contacts are provided by asparagine 74, histidine 80, and aspartate 87. Residue histidine 100 is the Proton donor of the active site. Substrate-binding positions include 101-102 (IS) and arginine 111.

The protein belongs to the type-II 3-dehydroquinase family. As to quaternary structure, homododecamer.

The enzyme catalyses 3-dehydroquinate = 3-dehydroshikimate + H2O. It participates in metabolic intermediate biosynthesis; chorismate biosynthesis; chorismate from D-erythrose 4-phosphate and phosphoenolpyruvate: step 3/7. Catalyzes a trans-dehydration via an enolate intermediate. The sequence is that of 3-dehydroquinate dehydratase from Bacillus cytotoxicus (strain DSM 22905 / CIP 110041 / 391-98 / NVH 391-98).